We begin with the raw amino-acid sequence, 1517 residues long: DNA-directed RNA polymerase subunit beta' (1517 aa).

Zn(2+)-binding residues include Cys-71, Cys-73, Cys-86, and Cys-89. Mg(2+) is bound by residues Asp-482, Asp-484, and Asp-486. Zn(2+) contacts are provided by Cys-812, Cys-886, Cys-893, and Cys-896.

The protein belongs to the RNA polymerase beta' chain family. The RNAP catalytic core consists of 2 alpha, 1 beta, 1 beta' and 1 omega subunit. When a sigma factor is associated with the core the holoenzyme is formed, which can initiate transcription. Requires Mg(2+) as cofactor. Zn(2+) serves as cofactor.

It catalyses the reaction RNA(n) + a ribonucleoside 5'-triphosphate = RNA(n+1) + diphosphate. Its function is as follows. DNA-dependent RNA polymerase catalyzes the transcription of DNA into RNA using the four ribonucleoside triphosphates as substrates. The chain is DNA-directed RNA polymerase subunit beta' from Campylobacter lari (strain RM2100 / D67 / ATCC BAA-1060).